The chain runs to 558 residues: MFARMSDLHVLLLMVLAGKTAFGLSLLSFLTEPDPDWTPDQYEYSQEYNNQEENASSTTAYSDNPDWYYEEDDPCLSNPCTHGGDCLVSGATFTCRCPDPFSGNRCQNVQNKCKNNPCGRGDCLITQSPPYHRCACKHPYRGSDCSRVVPVCRPNPCQNGGTCSRQRRRSKFTCACPDQFKGKLCEIGPDDCYVDDGYSYRGRVSKTIHQHTCLYWNSHLLLQEKYNMFMEDAEAHGIGEHNFCRNPDGDKKPWCFIKVNNVKVKWEYCDVPACSALDVANPEGRPTEPLTKFPEFGSCGRTEIAEKKVKRIFGGFKSTAGKHPWQASLQTSLRLTVSTPQGHYCGGALIHPCWVLTAAHCTEIKTKYLKVVLGDQDLTKTEFHEQSFGVQKIFKYSHYIEIDDIPYNDIALLKLKPVDGHCALESKYVKTVCLPDGPFLSGTECYISGWGVTETGEGSRHLLDAKVKLISNTICNSRQLYDHSIDDNMICAGNLQKPGQDSCQGDSGGPLTCEKDGTSYIYGIVSWGLECGKRPGVYTQVTKFLTWIKATMEKEASF.

Positions 1 to 23 (MFARMSDLHVLLLMVLAGKTAFG) are cleaved as a signal peptide. N54 carries an N-linked (GlcNAc...) asparagine glycan. EGF-like domains follow at residues 71–107 (EDDP…NRCQ), 109–146 (VQNK…SDCS), and 148–186 (VVPV…KLCE). Intrachain disulfides connect C75-C86, C80-C95, C97-C106, C113-C123, C118-C134, C136-C145, C152-C163, C157-C174, C176-C185, C192-C274, C213-C255, C244-C269, C299-C433, C345-C361, C353-C422, C445-C513, C475-C491, and C503-C531. The 84-residue stretch at 191-274 (DCYVDDGYSY…KWEYCDVPAC (84 aa)) folds into the Kringle domain. Residues 312–553 (IFGGFKSTAG…FLTWIKATME (242 aa)) form the Peptidase S1 domain. Catalysis depends on charge relay system residues H360 and D409. S507 serves as the catalytic Charge relay system.

The protein belongs to the peptidase S1 family. Heterodimer; disulfide-linked. Heterodimer of a 50 kDa heavy and a 27 kDa light chain linked by a disulfide bond. In terms of processing, proteolytic cleavage at Gly-23 or Leu-27 can give rise to the 50 kDa heavy chain (HC) and cleavage at Arg-311 or Lys-317 can give rise to the 27 kDa light chain (LC). The HC can undergo further proteolytic cleavage giving rise to a 26 kDa fragment. The LC can undergo further proteolytic cleavage at Arg-311 leading to a 17-kDa fragment and at Arg-478 leading to a 8-kDa fragment.

The protein localises to the secreted. In terms of biological role, cleaves the alpha-chain at multiple sites and the beta-chain between 'Lys-53' and 'Lys-54' but not the gamma-chain of fibrinogen and therefore does not initiate the formation of the fibrin clot and does not cause the fibrinolysis directly. It does not cleave (activate) prothrombin and plasminogen but converts the inactive single chain urinary plasminogen activator (pro-urokinase) to the active two chain form. Activates coagulation factor VII. May function as a tumor suppressor negatively regulating cell proliferation and cell migration. The sequence is that of Factor VII-activating protease (HABP2) from Bos taurus (Bovine).